A 166-amino-acid polypeptide reads, in one-letter code: MSQYFTLFRIEPAFDIDTENLEQTYRALAARFHPDKFASASAFEQKQAVMMSSTINDAYRTLKNPIDRAAYLLKTSGIDADAPEHTSFASEFLMQQMEWRETLMEARAGKDLESLKNLDNEIRDEQEKLFCGLKQSFARQDYDTAAQQVRQGRFLDKLRNEISSAL.

A J domain is found at 3–75; that stretch reads QYFTLFRIEP…IDRAAYLLKT (73 aa).

Belongs to the HscB family. In terms of assembly, interacts with HscA and stimulates its ATPase activity.

Co-chaperone involved in the maturation of iron-sulfur cluster-containing proteins. Seems to help targeting proteins to be folded toward HscA. In Neisseria meningitidis serogroup A / serotype 4A (strain DSM 15465 / Z2491), this protein is Co-chaperone protein HscB homolog.